A 357-amino-acid polypeptide reads, in one-letter code: Isopentenyl-diphosphate delta-isomerase (357 aa).

12 to 13 (RK) is a binding site for substrate. Residues Ser-70, 71–73 (SMT), Ser-101, and Asn-130 contribute to the FMN site. 101 to 103 (SMR) lines the substrate pocket. Gln-165 is a substrate binding site. Mg(2+) is bound at residue Glu-166. FMN-binding positions include Lys-197 and 310–311 (AR).

This sequence belongs to the IPP isomerase type 2 family. In terms of assembly, homooctamer. Dimer of tetramers. Requires FMN as cofactor. It depends on NADPH as a cofactor. The cofactor is Mg(2+).

The protein resides in the cytoplasm. The catalysed reaction is isopentenyl diphosphate = dimethylallyl diphosphate. Involved in the biosynthesis of isoprenoids. Catalyzes the 1,3-allylic rearrangement of the homoallylic substrate isopentenyl (IPP) to its allylic isomer, dimethylallyl diphosphate (DMAPP). The chain is Isopentenyl-diphosphate delta-isomerase from Pelodictyon phaeoclathratiforme (strain DSM 5477 / BU-1).